Reading from the N-terminus, the 273-residue chain is 2,3,4,5-tetrahydropyridine-2,6-dicarboxylate N-succinyltransferase (273 aa).

The substrate site is built by R104 and D141.

Belongs to the transferase hexapeptide repeat family. In terms of assembly, homotrimer.

It is found in the cytoplasm. It catalyses the reaction (S)-2,3,4,5-tetrahydrodipicolinate + succinyl-CoA + H2O = (S)-2-succinylamino-6-oxoheptanedioate + CoA. Its pathway is amino-acid biosynthesis; L-lysine biosynthesis via DAP pathway; LL-2,6-diaminopimelate from (S)-tetrahydrodipicolinate (succinylase route): step 1/3. The protein is 2,3,4,5-tetrahydropyridine-2,6-dicarboxylate N-succinyltransferase of Acinetobacter baylyi (strain ATCC 33305 / BD413 / ADP1).